A 105-amino-acid polypeptide reads, in one-letter code: UPF0145 protein Aflv_1588 (105 aa).

Belongs to the UPF0145 family.

The polypeptide is UPF0145 protein Aflv_1588 (Anoxybacillus flavithermus (strain DSM 21510 / WK1)).